We begin with the raw amino-acid sequence, 117 residues long: Large ribosomal subunit protein uL18 (117 aa).

Belongs to the universal ribosomal protein uL18 family. In terms of assembly, part of the 50S ribosomal subunit; part of the 5S rRNA/L5/L18/L25 subcomplex. Contacts the 5S and 23S rRNAs.

In terms of biological role, this is one of the proteins that bind and probably mediate the attachment of the 5S RNA into the large ribosomal subunit, where it forms part of the central protuberance. This Hydrogenovibrio crunogenus (strain DSM 25203 / XCL-2) (Thiomicrospira crunogena) protein is Large ribosomal subunit protein uL18.